The primary structure comprises 372 residues: Protein-glutamate methylesterase/protein-glutamine glutaminase 1 (372 aa).

Residues 4-121 (KVLVVDDSSF…ATNKDDAILL (118 aa)) enclose the Response regulatory domain. D55 carries the post-translational modification 4-aspartylphosphate. The interval 138–174 (VVRPTTPTPPPRSSASSVLGGVSTHTQPAPVRSSHAA) is disordered. The region spanning 179–372 (SGKQYKLLLI…ESILKESARG (194 aa)) is the CheB-type methylesterase domain. Catalysis depends on residues S191, H218, and D314.

Belongs to the CheB family. Phosphorylated by CheA. Phosphorylation of the N-terminal regulatory domain activates the methylesterase activity.

The protein localises to the cytoplasm. It catalyses the reaction [protein]-L-glutamate 5-O-methyl ester + H2O = L-glutamyl-[protein] + methanol + H(+). It carries out the reaction L-glutaminyl-[protein] + H2O = L-glutamyl-[protein] + NH4(+). Its function is as follows. Involved in chemotaxis. Part of a chemotaxis signal transduction system that modulates chemotaxis in response to various stimuli. Catalyzes the demethylation of specific methylglutamate residues introduced into the chemoreceptors (methyl-accepting chemotaxis proteins or MCP) by CheR. Also mediates the irreversible deamidation of specific glutamine residues to glutamic acid. This is Protein-glutamate methylesterase/protein-glutamine glutaminase 1 from Shewanella sp. (strain MR-4).